We begin with the raw amino-acid sequence, 185 residues long: Large ribosomal subunit protein bL25 (185 aa).

The protein belongs to the bacterial ribosomal protein bL25 family. CTC subfamily. In terms of assembly, part of the 50S ribosomal subunit; part of the 5S rRNA/L5/L18/L25 subcomplex. Contacts the 5S rRNA. Binds to the 5S rRNA independently of L5 and L18.

Its function is as follows. This is one of the proteins that binds to the 5S RNA in the ribosome where it forms part of the central protuberance. In Microcystis aeruginosa (strain NIES-843 / IAM M-2473), this protein is Large ribosomal subunit protein bL25.